Here is a 207-residue protein sequence, read N- to C-terminus: Peptidyl-tRNA hydrolase (207 aa).

Tyr14 contributes to the tRNA binding site. His19 (proton acceptor) is an active-site residue. The tRNA site is built by Tyr64, Asn66, and Asn112.

Belongs to the PTH family. As to quaternary structure, monomer.

It localises to the cytoplasm. It catalyses the reaction an N-acyl-L-alpha-aminoacyl-tRNA + H2O = an N-acyl-L-amino acid + a tRNA + H(+). Hydrolyzes ribosome-free peptidyl-tRNAs (with 1 or more amino acids incorporated), which drop off the ribosome during protein synthesis, or as a result of ribosome stalling. Its function is as follows. Catalyzes the release of premature peptidyl moieties from peptidyl-tRNA molecules trapped in stalled 50S ribosomal subunits, and thus maintains levels of free tRNAs and 50S ribosomes. This is Peptidyl-tRNA hydrolase from Rhodopseudomonas palustris (strain BisB5).